We begin with the raw amino-acid sequence, 434 residues long: Autophagy-related protein 18 (434 aa).

WD repeat units lie at residues 1 to 34 (MNYV…KIFT), 183 to 223 (AHRA…KLYQ), and 228 to 267 (TYPS…TGLP). A L/FRRG motif motif is present at residues 224–228 (FRRGT). The tract at residues 262–318 (PVTGLPESPQSPGDKDKWRRSRSFDSENGSPPAGISPGSEMADVPAEKSKSSGTFGS) is disordered. Residues 274 to 286 (GDKDKWRRSRSFD) show a composition bias toward basic and acidic residues. A WD 4 repeat occupies 367 to 407 (PRSGPVKSVVAMSSSSPQVMVVTSDGGFYIYSIDMETGGEG).

This sequence belongs to the WD repeat PROPPIN family. Component of the PI(3,5)P2 regulatory complex.

Its subcellular location is the preautophagosomal structure membrane. It localises to the vacuole membrane. The protein localises to the endosome membrane. In terms of biological role, the PI(3,5)P2 regulatory complex regulates both the synthesis and turnover of phosphatidylinositol 3,5-bisphosphate (PtdIns(3,5)P2). Necessary for proper vacuole morphology. Plays an important role in osmotically-induced vacuole fragmentation. Required for cytoplasm to vacuole transport (Cvt) vesicle formation, pexophagy and starvation-induced autophagy. Involved in correct atg9 trafficking to the pre-autophagosomal structure. Might also be involved in premeiotic DNA replication. The chain is Autophagy-related protein 18 (atg18) from Botryotinia fuckeliana (strain B05.10) (Noble rot fungus).